The chain runs to 569 residues: Glutamine--tRNA ligase (569 aa).

The segment at 1 to 23 (MSKDPMSKPTPEPAAHSKAGPAV) is disordered. The 'HIGH' region motif lies at 50–60 (PEPNGYLHIGH). ATP contacts are provided by residues 51-53 (EPN) and 57-63 (HIGHAKS). L-glutamine contacts are provided by Asp83 and Tyr228. Residues Thr247 and 277–278 (RL) contribute to the ATP site. A 'KMSKS' region motif is present at residues 284–288 (ITSKR).

This sequence belongs to the class-I aminoacyl-tRNA synthetase family. In terms of assembly, monomer.

It localises to the cytoplasm. It catalyses the reaction tRNA(Gln) + L-glutamine + ATP = L-glutaminyl-tRNA(Gln) + AMP + diphosphate. This chain is Glutamine--tRNA ligase, found in Pseudomonas syringae pv. tomato (strain ATCC BAA-871 / DC3000).